Consider the following 178-residue polypeptide: Large ribosomal subunit protein uL5 (178 aa).

Belongs to the universal ribosomal protein uL5 family. Part of the 50S ribosomal subunit; contacts the 5S rRNA and probably tRNA. Forms a bridge to the 30S subunit in the 70S ribosome.

This is one of the proteins that bind and probably mediate the attachment of the 5S RNA into the large ribosomal subunit, where it forms part of the central protuberance. In the 70S ribosome it contacts protein S13 of the 30S subunit (bridge B1b), connecting the 2 subunits; this bridge is implicated in subunit movement. May contact the P site tRNA; the 5S rRNA and some of its associated proteins might help stabilize positioning of ribosome-bound tRNAs. The chain is Large ribosomal subunit protein uL5 from Sulfolobus acidocaldarius (strain ATCC 33909 / DSM 639 / JCM 8929 / NBRC 15157 / NCIMB 11770).